The following is a 473-amino-acid chain: uncharacterized protein (473 aa).

Residues 26–254 (PKLYIASSGV…KMSEIFNSFG (229 aa)) form the SET domain.

This is an uncharacterized protein from Schizosaccharomyces pombe (strain 972 / ATCC 24843) (Fission yeast).